The following is a 185-amino-acid chain: Elongation factor P (185 aa).

It belongs to the elongation factor P family.

It is found in the cytoplasm. Its pathway is protein biosynthesis; polypeptide chain elongation. Functionally, involved in peptide bond synthesis. Stimulates efficient translation and peptide-bond synthesis on native or reconstituted 70S ribosomes in vitro. Probably functions indirectly by altering the affinity of the ribosome for aminoacyl-tRNA, thus increasing their reactivity as acceptors for peptidyl transferase. This Caldicellulosiruptor saccharolyticus (strain ATCC 43494 / DSM 8903 / Tp8T 6331) protein is Elongation factor P.